The chain runs to 370 residues: Anthranilate phosphoribosyltransferase (370 aa).

A disordered region spans residues Met1–Trp27. 5-phospho-alpha-D-ribose 1-diphosphate contacts are provided by residues Gly107, Gly110–Asp111, Thr115, Asn117–Thr120, Lys135–Ser143, and Gly147. Gly107 is an anthranilate binding site. Position 119 (Ser119) interacts with Mg(2+). Asn138 is a binding site for anthranilate. Arg193 contacts anthranilate. Mg(2+)-binding residues include Asp251 and Glu252.

Belongs to the anthranilate phosphoribosyltransferase family. In terms of assembly, homodimer. Mg(2+) is required as a cofactor.

It carries out the reaction N-(5-phospho-beta-D-ribosyl)anthranilate + diphosphate = 5-phospho-alpha-D-ribose 1-diphosphate + anthranilate. It functions in the pathway amino-acid biosynthesis; L-tryptophan biosynthesis; L-tryptophan from chorismate: step 2/5. Functionally, catalyzes the transfer of the phosphoribosyl group of 5-phosphorylribose-1-pyrophosphate (PRPP) to anthranilate to yield N-(5'-phosphoribosyl)-anthranilate (PRA). This chain is Anthranilate phosphoribosyltransferase, found in Mycobacterium bovis (strain ATCC BAA-935 / AF2122/97).